Consider the following 506-residue polypeptide: Deoxyguanosinetriphosphate triphosphohydrolase (506 aa).

An HD domain is found at 66–274; that stretch reads RLTHSLEVQQ…MEAADDISYC (209 aa).

It belongs to the dGTPase family. Type 1 subfamily. In terms of assembly, homotetramer. Requires Mg(2+) as cofactor.

The enzyme catalyses dGTP + H2O = 2'-deoxyguanosine + triphosphate + H(+). DGTPase preferentially hydrolyzes dGTP over the other canonical NTPs. The sequence is that of Deoxyguanosinetriphosphate triphosphohydrolase from Yersinia pestis bv. Antiqua (strain Antiqua).